We begin with the raw amino-acid sequence, 115 residues long: LSM complex subunit LSM7 (115 aa).

The segment covering 1–10 has biased composition (basic and acidic residues); that stretch reads MHQQHSKSEN. The interval 1–23 is disordered; the sequence is MHQQHSKSENKPQQQRKKFEGPK. The region spanning 25–108 is the Sm domain; sequence EAILDLAKYK…LVSLSSAEGS (84 aa).

Belongs to the snRNP Sm proteins family. In terms of assembly, component of the heptameric LSM1-LSM7 complex that forms a seven-membered ring structure with a donut shape. The LSm subunits are arranged in the order LSM1, LSM2, LSM3, LSM6, LSM5, LSM7 and LSM4. Except for LSM1, where a C-terminal helix crosses the ring structure to form additional interactions with LSM3 and LSM6, each subunit interacts only with its two neighboring subunits. The LSM1-LSM7 complex interacts with PAT1; within the complex PAT1 has direct interactions with LSM2 and LSM3. The LSM1-LSM7 complex interacts with XRN1. Component of the heptameric LSM2-LSM8 complex that forms a seven-membered ring structure with a donut shape; an RNA strand can pass through the hole in the center of the ring structure. The LSm subunits are arranged in the order LSM8, LSM2, LSM3, LSM6, LSM5, LSM7 and LSM4. Component of the spliceosome U4/U6-U5 tri-snRNP complex composed of the U4, U6 and U5 snRNAs and at least PRP3, PRP4, PRP6, PRP8, PRP18, PRP31, PRP38, SNU13, SNU23, SNU66, SNU114, SPP381, SMB1, SMD1, SMD2, SMD3, SMX2, SMX3, LSM2, LSM3, LSM4, LSM5, LSM6, LSM7, LSM8, BRR2 and DIB1. May be found in a complex comprising LSM2-LSM7 without LSM1 or LSM8; the complex associates with pre-P RNA and snoRNA SNR5.

It is found in the nucleus. It localises to the nucleolus. Its subcellular location is the cytoplasm. Component of LSm protein complexes, which are involved in RNA processing and may function in a chaperone-like manner. Component of the cytoplasmic LSM1-LSM7 complex which is involved in mRNA degradation by activating the decapping step. Together with PAT1, the LSM1-LSM7 complex binds to osmotic stress-activated mRNAs to attenuate the osmotic stress response, probably by limiting ribosome access to the mRNA and consequently translation. Component of the nuclear LSM2-LSM8 complex, which is involved in spliceosome assembly. The LSM2-LSM8 complex plays a role in the biogenesis of the spliceosomal U4/U6-U5 tri-snRNP complex by accelerating PRP24-mediated annealing of U4/U6 di-snRNA. The LSM2-LSM8 complex binds U6 snRNA terminating with a non-cyclic 3' phosphate group. LSM2-LSM8 is probably also involved in degradation of nuclear pre-mRNA by targeting them for decapping. LSM2-LSM8 could be involved in processing of pre-tRNAs, pre-rRNAs and U3 snoRNA, although involvement may be indirect. In a complex that probably contains LSM2-LSM7, but not LSM1 or LSM8, associates with the precursor of the RNA component of RNase P (pre-P RNA) and may be involved in maturing pre-P RNA; the complex also associates with snoRNA SNR5. The chain is LSM complex subunit LSM7 (LSM7) from Saccharomyces cerevisiae (strain ATCC 204508 / S288c) (Baker's yeast).